Consider the following 380-residue polypeptide: Carbonic anhydrase 2 (380 aa).

A signal peptide spans 1 to 20; sequence MARTGALLLAALALAGCAQA. The 285-residue stretch at 38–322 folds into the Alpha-carbonic anhydrase domain; sequence DHWDHSLNGE…HHHRRLLHNH (285 aa). 3 cysteine pairs are disulfide-bonded: Cys61-Cys264, Cys194-Cys198, and Cys296-Cys354. Residue Asn101 is glycosylated (N-linked (GlcNAc...) asparagine). The active-site Proton acceptor is the His112. N-linked (GlcNAc...) asparagine glycosylation is present at Asn135. Zn(2+) is bound by residues His163, His165, and His182. 260-261 is a binding site for substrate; that stretch reads TT. A glycan (N-linked (GlcNAc...) asparagine) is linked at Asn297.

This sequence belongs to the alpha-carbonic anhydrase family. In terms of assembly, tetramer of two large and two small subunits linked by two disulfide bonds. Requires Zn(2+) as cofactor.

The protein resides in the periplasm. It carries out the reaction hydrogencarbonate + H(+) = CO2 + H2O. Reversible hydration of carbon dioxide. The chain is Carbonic anhydrase 2 (CAH2) from Chlamydomonas reinhardtii (Chlamydomonas smithii).